A 173-amino-acid chain; its full sequence is Thiol-disulfide oxidoreductase ResA (173 aa).

The helical; Signal-anchor for type II membrane protein transmembrane segment at 10–29 (VIILLILCGAVGFTLYQGYF) threads the bilayer. Residues 35–173 (MEIGKEAPNF…LEEYLKKITP (139 aa)) form the Thioredoxin domain. Cysteine 73 and cysteine 76 are disulfide-bonded.

It belongs to the thioredoxin family. ResA subfamily.

The protein localises to the cell membrane. Its pathway is protein modification; cytochrome c assembly. In terms of biological role, thiol-disulfide oxidoreductase which is required in disulfide reduction during c-type cytochrome synthesis. May accept reducing equivalents from CcdA, leading to breakage of disulfide bonds in apocytochrome c; following this reduction heme can be covalently attached. This Bacillus thuringiensis subsp. konkukian (strain 97-27) protein is Thiol-disulfide oxidoreductase ResA.